Consider the following 179-residue polypeptide: MTLKNRYKESIRPKLLKDLGLKNIHQVPKVVKVNVNRGLGEAASNSKALEASLNEMATITGQKALVTRAKKAIAGFKIREGMPIGCTVTLRGDRMYSFLERFINLALPRIRDFRGVNPKSFDGRGNYTVGVKEQLIFPEISFDKIDSIRGMDITIVTSAKSDQEGKALLQELGMPFSKN.

It belongs to the universal ribosomal protein uL5 family. Part of the 50S ribosomal subunit; part of the 5S rRNA/L5/L18/L25 subcomplex. Contacts the 5S rRNA and the P site tRNA. Forms a bridge to the 30S subunit in the 70S ribosome.

This is one of the proteins that bind and probably mediate the attachment of the 5S RNA into the large ribosomal subunit, where it forms part of the central protuberance. In the 70S ribosome it contacts protein S13 of the 30S subunit (bridge B1b), connecting the 2 subunits; this bridge is implicated in subunit movement. Contacts the P site tRNA; the 5S rRNA and some of its associated proteins might help stabilize positioning of ribosome-bound tRNAs. This is Large ribosomal subunit protein uL5 from Prochlorococcus marinus (strain AS9601).